Here is a 153-residue protein sequence, read N- to C-terminus: Bacteriohemerythrin (153 aa).

Fe cation is bound by residues histidine 21, histidine 57, glutamate 61, histidine 76, histidine 80, histidine 115, and aspartate 120.

The protein belongs to the hemerythrin family. As to quaternary structure, monomer.

Its function is as follows. Oxygen-binding protein. May be involved in a storage mechanism or for delivery to oxygen-requiring enzymes. The oxygen-binding site contains two iron atoms. This chain is Bacteriohemerythrin, found in Stenotrophomonas maltophilia (strain R551-3).